We begin with the raw amino-acid sequence, 191 residues long: Small ribosomal subunit protein uS5 (191 aa).

Residues 1–20 (MAAERERGGRERSRDREERD) form a disordered region. Residues 23–86 (FVDKLVHINR…EAAKRNLTRV (64 aa)) form the S5 DRBM domain.

The protein belongs to the universal ribosomal protein uS5 family. Part of the 30S ribosomal subunit. Contacts proteins S4 and S8.

In terms of biological role, with S4 and S12 plays an important role in translational accuracy. Functionally, located at the back of the 30S subunit body where it stabilizes the conformation of the head with respect to the body. The sequence is that of Small ribosomal subunit protein uS5 from Rhodopseudomonas palustris (strain HaA2).